The primary structure comprises 761 residues: Neurotrypsin (761 aa).

Positions 1–21 (MALARCVLAVILGVLSEVARA) are cleaved as a signal peptide. The disordered stretch occupies residues 26–88 (HSPLHRPHPS…PTISRRCGAG (63 aa)). Residues 54 to 63 (TPRFPLPPRA) are compositionally biased toward pro residues. Residues 85-157 (CGAGEPWGNA…GKVDWGYCDC (73 aa)) form the Kringle domain. 17 cysteine pairs are disulfide-bonded: cysteine 85-cysteine 157, cysteine 101-cysteine 141, cysteine 130-cysteine 155, cysteine 191-cysteine 255, cysteine 204-cysteine 265, cysteine 235-cysteine 245, cysteine 298-cysteine 361, cysteine 311-cysteine 371, cysteine 341-cysteine 351, cysteine 411-cysteine 475, cysteine 424-cysteine 485, cysteine 455-cysteine 465, cysteine 505-cysteine 636, cysteine 547-cysteine 563, cysteine 651-cysteine 717, cysteine 680-cysteine 694, and cysteine 707-cysteine 736. Asparagine 93 is a glycosylation site (N-linked (GlcNAc...) asparagine). SRCR domains lie at 166–267 (IRLV…SCAP), 273–373 (IRLS…TCYP), and 386–487 (IRLM…ICDY). The segment at 505 to 516 (CGLRLLHRRQKR) is zymogen activation region. Residues 517–760 (IIGGNNSLRG…FVPWIKSVTS (244 aa)) form the Peptidase S1 domain. Asparagine 521 carries an N-linked (GlcNAc...) asparagine glycan. Residue histidine 562 is the Charge relay system of the active site. A glycan (N-linked (GlcNAc...) asparagine) is linked at asparagine 569. The active-site Charge relay system is aspartate 612. Residue serine 711 is the Charge relay system of the active site.

It belongs to the peptidase S1 family.

It localises to the secreted. Plays a role in neuronal plasticity and the proteolytic action may subserve structural reorganizations associated with learning and memory operations. The chain is Neurotrypsin (Prss12) from Rattus norvegicus (Rat).